We begin with the raw amino-acid sequence, 475 residues long: Aspartyl/glutamyl-tRNA(Asn/Gln) amidotransferase subunit B (475 aa).

This sequence belongs to the GatB/GatE family. GatB subfamily. Heterotrimer of A, B and C subunits.

The enzyme catalyses L-glutamyl-tRNA(Gln) + L-glutamine + ATP + H2O = L-glutaminyl-tRNA(Gln) + L-glutamate + ADP + phosphate + H(+). The catalysed reaction is L-aspartyl-tRNA(Asn) + L-glutamine + ATP + H2O = L-asparaginyl-tRNA(Asn) + L-glutamate + ADP + phosphate + 2 H(+). Allows the formation of correctly charged Asn-tRNA(Asn) or Gln-tRNA(Gln) through the transamidation of misacylated Asp-tRNA(Asn) or Glu-tRNA(Gln) in organisms which lack either or both of asparaginyl-tRNA or glutaminyl-tRNA synthetases. The reaction takes place in the presence of glutamine and ATP through an activated phospho-Asp-tRNA(Asn) or phospho-Glu-tRNA(Gln). The sequence is that of Aspartyl/glutamyl-tRNA(Asn/Gln) amidotransferase subunit B from Chlorobium phaeobacteroides (strain BS1).